The sequence spans 968 residues: Putative pectinesterase/pectinesterase inhibitor 26 (968 aa).

A helical membrane pass occupies residues 33 to 53 (IGISVAVLVAIIISSTVTIAI). Positions 71-230 (LTPAASLKTV…TEFTSNSLAI (160 aa)) are pectinesterase inhibitor 26 A. N-linked (GlcNAc...) asparagine glycans are attached at residues asparagine 101, asparagine 158, asparagine 219, asparagine 295, asparagine 352, asparagine 400, asparagine 464, asparagine 541, asparagine 559, and asparagine 603. The segment at 265-430 (LTPAASLRNV…RKFTSNSLAI (166 aa)) is pectinesterase inhibitor 26 B. Residues 453 to 614 (PTPSSVLRTV…TEFTSNSLAI (162 aa)) form a pectinesterase inhibitor 26 C region. The pectinesterase 26 stretch occupies residues 660–954 (HVTVAADGSG…FTVKYFLRGD (295 aa)). A substrate-binding site is contributed by threonine 735. N-linked (GlcNAc...) asparagine glycosylation is present at asparagine 737. Glutamine 765 provides a ligand contact to substrate. The active-site Proton donor; for pectinesterase activity is aspartate 788. Cysteine 802 and cysteine 822 are joined by a disulfide. Aspartate 809 acts as the Nucleophile; for pectinesterase activity in catalysis. The N-linked (GlcNAc...) asparagine glycan is linked to asparagine 863. 2 residues coordinate substrate: arginine 872 and tryptophan 874. N-linked (GlcNAc...) asparagine glycosylation occurs at asparagine 900.

The protein in the N-terminal section; belongs to the PMEI family. In the C-terminal section; belongs to the pectinesterase family. In terms of tissue distribution, expressed in flowers.

The protein localises to the membrane. It carries out the reaction [(1-&gt;4)-alpha-D-galacturonosyl methyl ester](n) + n H2O = [(1-&gt;4)-alpha-D-galacturonosyl](n) + n methanol + n H(+). It participates in glycan metabolism; pectin degradation; 2-dehydro-3-deoxy-D-gluconate from pectin: step 1/5. Functionally, acts in the modification of cell walls via demethylesterification of cell wall pectin. This chain is Putative pectinesterase/pectinesterase inhibitor 26 (PME26), found in Arabidopsis thaliana (Mouse-ear cress).